Consider the following 511-residue polypeptide: Xylose import ATP-binding protein XylG (511 aa).

2 ABC transporter domains span residues 6 to 244 (LEMR…VGRE) and 261 to 506 (FEAR…IGKP). 38 to 45 (GENGAGKS) serves as a coordination point for ATP.

This sequence belongs to the ABC transporter superfamily. Xylose importer (TC 3.A.1.2.4) family. The complex is composed of two ATP-binding proteins (XylG), two transmembrane proteins (XylH) and a solute-binding protein (XylF).

It is found in the cell inner membrane. The enzyme catalyses D-xylose(out) + ATP + H2O = D-xylose(in) + ADP + phosphate + H(+). In terms of biological role, part of the ABC transporter complex XylFGH involved in xylose import. Responsible for energy coupling to the transport system. The sequence is that of Xylose import ATP-binding protein XylG from Brucella abortus (strain 2308).